A 154-amino-acid chain; its full sequence is Myoglobin (154 aa).

The region spanning 2-148 (GLSEGEWQLV…FRKDIAAKYK (147 aa)) is the Globin domain. At Ser-4 the chain carries Phosphoserine. His-65 contacts nitrite. His-65 provides a ligand contact to O2. At Thr-68 the chain carries Phosphothreonine. His-94 contacts heme b.

In terms of assembly, monomer.

The protein resides in the cytoplasm. It localises to the sarcoplasm. It catalyses the reaction Fe(III)-heme b-[protein] + nitric oxide + H2O = Fe(II)-heme b-[protein] + nitrite + 2 H(+). The enzyme catalyses H2O2 + AH2 = A + 2 H2O. Functionally, monomeric heme protein which primary function is to store oxygen and facilitate its diffusion within muscle tissues. Reversibly binds oxygen through a pentacoordinated heme iron and enables its timely and efficient release as needed during periods of heightened demand. Depending on the oxidative conditions of tissues and cells, and in addition to its ability to bind oxygen, it also has a nitrite reductase activity whereby it regulates the production of bioactive nitric oxide. Under stress conditions, like hypoxia and anoxia, it also protects cells against reactive oxygen species thanks to its pseudoperoxidase activity. This is Myoglobin (MB) from Delphinapterus leucas (Beluga whale).